The following is a 191-amino-acid chain: MSEQLTDQVLVERVQKGDQKAFNLLVVRYQHKVASLVSRYVPSGDVPDVVQEAFIKAYRALDSFRGDSAFYTWLYRIAVNTAKNYLVAQGRRPPSSDVDAIEAENFESGGALKEISNPENLMLSEELRQIVFRTIESLPEDLRMAITLRELDGLSYEEIAAIMDCPVGTVRSRIFRAREAIDNKVQPLIRR.

The interval 1–153 (MSEQLTDQVL…MAITLRELDG (153 aa)) is binds RNAP core. The segment at 25–92 (LVVRYQHKVA…KNYLVAQGRR (68 aa)) is sigma-70 factor domain-2. A Polymerase core binding motif is present at residues 48–61 (DVVQEAFIKAYRAL). The sigma-70 factor domain-4 stretch occupies residues 129–180 (QIVFRTIESLPEDLRMAITLRELDGLSYEEIAAIMDCPVGTVRSRIFRAREA). The segment at residues 156–175 (YEEIAAIMDCPVGTVRSRIF) is a DNA-binding region (H-T-H motif).

Belongs to the sigma-70 factor family. ECF subfamily. As to quaternary structure, interacts transiently with the RNAP catalytic core formed by RpoA, RpoB, RpoC and RpoZ (2 alpha, 1 beta, 1 beta' and 1 omega subunit) to form the RNAP holoenzyme that can initiate transcription. Interacts 1:1 with anti-sigma-E factor RseA which prevents binding to RNAP catalytic core.

It is found in the cytoplasm. ECF sigma-E is held in an inactive form by its cognate anti-sigma factor (RseA) until released by regulated intramembrane proteolysis (RIP). RIP occurs when an extracytoplasmic signal (periplasmic stress and excess LPS) triggers a concerted proteolytic cascade to transmit information and elicit cellular responses. The anti-sigma factor RseA is an inner membrane protein, binding sigma-E in the cytoplasm and RseB in the periplasm. RseA is first cut extracytoplasmically (site-1 protease, S1P, by DegS), then within the membrane itself (site-2 protease, S2P, by RseP), while cytoplasmic proteases (predominantly ClpX-ClpP) finish degrading the regulatory protein, liberating sigma-E. Degradation of RseA requires 2 signals to activate DegS; an outer membrane protein (OMP) signal activates DegS, while an LPS signal causes release of RseB from RseA, freeing RseA to be cleaved. Sigma factors are initiation factors that promote the attachment of RNA polymerase (RNAP) to specific initiation sites and are then released. Extracytoplasmic function (ECF) sigma-E controls the envelope stress response, responding to periplasmic protein stress, increased levels of periplasmic lipopolysaccharide (LPS) as well as heat shock and oxidative stress; it controls protein processing in the extracytoplasmic compartment. This chain is ECF RNA polymerase sigma-E factor (rpoE), found in Escherichia coli O157:H7.